Reading from the N-terminus, the 321-residue chain is Fibronectin type III domain-containing protein 8 (321 aa).

Positions 175-277 constitute a Fibronectin type-III domain; sequence VPEVPFICEH…KPYKFATVST (103 aa).

The polypeptide is Fibronectin type III domain-containing protein 8 (Fndc8) (Mus musculus (Mouse)).